A 445-amino-acid chain; its full sequence is Tubulin beta-4B chain (445 aa).

An MREI motif motif is present at residues 1 to 4 (MREI). Q11 lines the GTP pocket. A Phosphothreonine modification is found at T55. An N6-acetyllysine modification is found at K58. GTP-binding residues include E69, S138, G142, T143, and G144. Residue E69 coordinates Mg(2+). A Phosphoserine; by CDK1 modification is found at S172. Residues N204 and N226 each contribute to the GTP site. The tract at residues 426-445 (QDATAEEEGEFEEEAEEEVA) is disordered. Positions 429–445 (TAEEEGEFEEEAEEEVA) are enriched in acidic residues. 5-glutamyl polyglutamate is present on E438.

This sequence belongs to the tubulin family. Dimer of alpha and beta chains. A typical microtubule is a hollow water-filled tube with an outer diameter of 25 nm and an inner diameter of 15 nM. Alpha-beta heterodimers associate head-to-tail to form protofilaments running lengthwise along the microtubule wall with the beta-tubulin subunit facing the microtubule plus end conferring a structural polarity. Microtubules usually have 13 protofilaments but different protofilament numbers can be found in some organisms and specialized cells. Component of sperm flagellar doublet microtubules. Mg(2+) is required as a cofactor. In terms of processing, some glutamate residues at the C-terminus are polyglycylated, resulting in polyglycine chains on the gamma-carboxyl group. Glycylation is mainly limited to tubulin incorporated into axonemes (cilia and flagella) whereas glutamylation is prevalent in neuronal cells, centrioles, axonemes, and the mitotic spindle. Both modifications can coexist on the same protein on adjacent residues, and lowering polyglycylation levels increases polyglutamylation, and reciprocally. Cilia and flagella glycylation is required for their stability and maintenance. Flagella glycylation controls sperm motility. Post-translationally, some glutamate residues at the C-terminus are polyglutamylated, resulting in polyglutamate chains on the gamma-carboxyl group. Polyglutamylation plays a key role in microtubule severing by spastin (SPAST). SPAST preferentially recognizes and acts on microtubules decorated with short polyglutamate tails: severing activity by SPAST increases as the number of glutamates per tubulin rises from one to eight, but decreases beyond this glutamylation threshold. Glutamylation is also involved in cilia motility. Phosphorylated on Ser-172 by CDK1 during the cell cycle, from metaphase to telophase, but not in interphase. This phosphorylation inhibits tubulin incorporation into microtubules.

Its subcellular location is the cytoplasm. The protein localises to the cytoskeleton. It localises to the flagellum axoneme. In terms of biological role, tubulin is the major constituent of microtubules, a cylinder consisting of laterally associated linear protofilaments composed of alpha- and beta-tubulin heterodimers. Microtubules grow by the addition of GTP-tubulin dimers to the microtubule end, where a stabilizing cap forms. Below the cap, tubulin dimers are in GDP-bound state, owing to GTPase activity of alpha-tubulin. The polypeptide is Tubulin beta-4B chain (Tubb4b) (Rattus norvegicus (Rat)).